Consider the following 382-residue polypeptide: MSINVFWFLPTHGDGHYLGSSEGARAVDYSYLQQIAQAADRLGFGGVLIPTGRSCEDSWLVAASLIPVTQRLKFLVALRPGIISPTLAARQAATLDRLSNGRALFNLVTGGDPEELAAEGLHLNHTERYEASAEFTHVWRKVLEGETVDFAGKHIQVKGAKLLFPPVQHPRPPLYFGGSSAAAQDLAAEQVELYLTWGEPPEQVKEKIEEVRAKAAAKGRTVRFGIRLHVIVRETTEEAWRAANRLIANLDDKTIADAQQAFAGFDSVGQQRMAALHGGKKDNLEISPNLWAGVGLVRGGAGTALVGDGPTVAQRIQEYADLGIDTFVFSGYPHLEEAYRVSELLFPHLDLATTELPTQRPATQPQGEVVANIYVPQKVSQS.

This sequence belongs to the SsuD family. As to quaternary structure, homotetramer.

It catalyses the reaction an alkanesulfonate + FMNH2 + O2 = an aldehyde + FMN + sulfite + H2O + 2 H(+). Catalyzes the desulfonation of aliphatic sulfonates. This is Alkanesulfonate monooxygenase from Yersinia pestis bv. Antiqua (strain Antiqua).